A 60-amino-acid chain; its full sequence is Large ribosomal subunit protein uL30 (60 aa).

It belongs to the universal ribosomal protein uL30 family. In terms of assembly, part of the 50S ribosomal subunit.

The sequence is that of Large ribosomal subunit protein uL30 from Pseudoalteromonas translucida (strain TAC 125).